A 351-amino-acid polypeptide reads, in one-letter code: Flagellin (351 aa).

This sequence belongs to the bacterial flagellin family.

The protein resides in the secreted. It is found in the bacterial flagellum. Its function is as follows. Flagellin is the subunit protein which polymerizes to form the filaments of bacterial flagella. The chain is Flagellin (fliC) from Serratia marcescens.